A 1342-amino-acid chain; its full sequence is DNA-directed RNA polymerase subunit beta (1342 aa).

This sequence belongs to the RNA polymerase beta chain family. The RNAP catalytic core consists of 2 alpha, 1 beta, 1 beta' and 1 omega subunit. When a sigma factor is associated with the core the holoenzyme is formed, which can initiate transcription.

It carries out the reaction RNA(n) + a ribonucleoside 5'-triphosphate = RNA(n+1) + diphosphate. Functionally, DNA-dependent RNA polymerase catalyzes the transcription of DNA into RNA using the four ribonucleoside triphosphates as substrates. This Vibrio campbellii (strain ATCC BAA-1116) protein is DNA-directed RNA polymerase subunit beta.